Consider the following 478-residue polypeptide: Bifunctional protein HldE (478 aa).

Residues 1–318 (MKVTLPDFRQ…ENAIRGRADT (318 aa)) form a ribokinase region. 195-198 (NLSE) is a binding site for ATP. Aspartate 264 is a catalytic residue. Residues 344-478 (MTNGCFDILH…NMIKASTSQS (135 aa)) are cytidylyltransferase.

In the N-terminal section; belongs to the carbohydrate kinase PfkB family. It in the C-terminal section; belongs to the cytidylyltransferase family. Homodimer.

It catalyses the reaction D-glycero-beta-D-manno-heptose 7-phosphate + ATP = D-glycero-beta-D-manno-heptose 1,7-bisphosphate + ADP + H(+). It carries out the reaction D-glycero-beta-D-manno-heptose 1-phosphate + ATP + H(+) = ADP-D-glycero-beta-D-manno-heptose + diphosphate. It participates in nucleotide-sugar biosynthesis; ADP-L-glycero-beta-D-manno-heptose biosynthesis; ADP-L-glycero-beta-D-manno-heptose from D-glycero-beta-D-manno-heptose 7-phosphate: step 1/4. It functions in the pathway nucleotide-sugar biosynthesis; ADP-L-glycero-beta-D-manno-heptose biosynthesis; ADP-L-glycero-beta-D-manno-heptose from D-glycero-beta-D-manno-heptose 7-phosphate: step 3/4. In terms of biological role, catalyzes the phosphorylation of D-glycero-D-manno-heptose 7-phosphate at the C-1 position to selectively form D-glycero-beta-D-manno-heptose-1,7-bisphosphate. Its function is as follows. Catalyzes the ADP transfer from ATP to D-glycero-beta-D-manno-heptose 1-phosphate, yielding ADP-D-glycero-beta-D-manno-heptose. This chain is Bifunctional protein HldE, found in Pectobacterium atrosepticum (strain SCRI 1043 / ATCC BAA-672) (Erwinia carotovora subsp. atroseptica).